Consider the following 916-residue polypeptide: Chitin synthase B (916 aa).

2 disordered regions span residues 1-75 (MAYH…GYSL) and 118-141 (ARSE…GGNG). A compositionally biased stretch (basic and acidic residues) spans 14–26 (HTYDDGHQLRDLS). Positions 59 to 75 (RGLTASPVQRPTSGYSL) are enriched in polar residues. 7 helical membrane passes run 544-561 (RWLN…MHFG), 588-608 (FLTW…MDLV), 629-649 (IINT…FILA), 664-684 (SFVA…YLVV), 716-736 (IIII…FMYL), 845-865 (LVTL…SEGL), and 884-904 (ALLW…TWFL).

The protein belongs to the chitin synthase family. Class III subfamily. Interacts with kibesin kinA. Post-translationally, activity requires trypsin activation, suggesting a zymogenic nature. Phosphorylated at yet unidentified residues in a N-terminal disordered region-dependent manner.

It localises to the cell membrane. Its subcellular location is the cell tip. The protein localises to the cell septum. The catalysed reaction is [(1-&gt;4)-N-acetyl-beta-D-glucosaminyl](n) + UDP-N-acetyl-alpha-D-glucosamine = [(1-&gt;4)-N-acetyl-beta-D-glucosaminyl](n+1) + UDP + H(+). Activity is stimulated by Mg(2+) and is inhibited by polyoxin D. Polymerizes chitin, a structural polymer of the cell wall and septum, by transferring the sugar moiety of UDP-GlcNAc to the non-reducing end of the growing chitin polymer. Does not substantially contribute to the rigidity of the cell wall but is necessary for normal hyphal growth and organization. In addition to its functions in the formation of normal cell walls of hyphae, is also involved in conidiophore and conidia development. The chain is Chitin synthase B from Emericella nidulans (strain FGSC A4 / ATCC 38163 / CBS 112.46 / NRRL 194 / M139) (Aspergillus nidulans).